Consider the following 609-residue polypeptide: Membrane protein insertase YidC (609 aa).

5 consecutive transmembrane segments (helical) span residues 8 to 28 (LILA…LFPP), 381 to 401 (MGWS…PLAL), 451 to 471 (LPIL…FVTI), 509 to 529 (SLTA…SMWL), and 545 to 565 (IFAW…SGLV).

This sequence belongs to the OXA1/ALB3/YidC family. Type 1 subfamily. In terms of assembly, interacts with the Sec translocase complex via SecD. Specifically interacts with transmembrane segments of nascent integral membrane proteins during membrane integration.

Its subcellular location is the cell inner membrane. Required for the insertion and/or proper folding and/or complex formation of integral membrane proteins into the membrane. Involved in integration of membrane proteins that insert both dependently and independently of the Sec translocase complex, as well as at least some lipoproteins. Aids folding of multispanning membrane proteins. This chain is Membrane protein insertase YidC, found in Ruegeria pomeroyi (strain ATCC 700808 / DSM 15171 / DSS-3) (Silicibacter pomeroyi).